The sequence spans 1361 residues: Rho guanine nucleotide exchange factor 18 (1361 aa).

Disordered regions lie at residues leucine 33–glutamate 88, serine 131–valine 156, and aspartate 244–arginine 292. Over residues proline 50–arginine 61 the composition is skewed to basic and acidic residues. The segment covering leucine 64–aspartate 73 has biased composition (polar residues). Residues leucine 74 to glutamate 88 are compositionally biased toward basic and acidic residues. 2 stretches are compositionally biased toward basic and acidic residues: residues glycine 245–threonine 256 and arginine 271–arginine 292. The C2H2-type; degenerate zinc finger occupies serine 310–leucine 334. A disordered region spans residues threonine 348–leucine 368. Residues lysine 447–lysine 644 form the DH domain. Residues glutamine 684 to glutamate 786 form the PH domain. 4 disordered regions span residues alanine 893–leucine 980, leucine 1143–lysine 1211, alanine 1229–serine 1264, and methionine 1277–phenylalanine 1361. At threonine 912 the chain carries Phosphothreonine. Serine 921 bears the Phosphoserine mark. Residues leucine 1038 to threonine 1148 adopt a coiled-coil conformation. Basic and acidic residues predominate over residues tyrosine 1191–lysine 1211. Over residues arginine 1254–serine 1264 the composition is skewed to polar residues. Phosphoserine occurs at positions 1289 and 1291. Pro residues-rich tracts occupy residues proline 1300 to aspartate 1317 and proline 1334 to alanine 1344. Residues alanine 1349–phenylalanine 1361 are compositionally biased toward basic and acidic residues.

Interacts with SEPT9; the interaction may inhibit GEF activity. Interacts with Gbetagamma subunits GNB1 and GNG2. Interacts with EPB41L4B. Interacts with PATJ (via C-terminus). As to expression, expressed in all tissues tested with highest expression in kidney and pancreas. Weakly or not expressed in liver, skeletal muscle and testis. Isoform 1: Expressed in eosinophils. Isoform 2: Expressed in eosinophils. Isoform 3: Expressed in eosinophils. Isoform 4: Not detected in eosinophils.

Its subcellular location is the cytoplasm. It is found in the cytoskeleton. The protein localises to the cell membrane. It localises to the apical cell membrane. Functionally, acts as a guanine nucleotide exchange factor (GEF) for RhoA GTPases. Its activation induces formation of actin stress fibers. Also acts as a GEF for RAC1, inducing production of reactive oxygen species (ROS). Does not act as a GEF for CDC42. The G protein beta-gamma (Gbetagamma) subunits of heterotrimeric G proteins act as activators, explaining the integrated effects of LPA and other G-protein coupled receptor agonists on actin stress fiber formation, cell shape change and ROS production. Required for EPB41L4B-mediated regulation of the circumferential actomyosin belt in epithelial cells. The polypeptide is Rho guanine nucleotide exchange factor 18 (ARHGEF18) (Homo sapiens (Human)).